The primary structure comprises 270 residues: Phosphatidate cytidylyltransferase (270 aa).

Transmembrane regions (helical) follow at residues 19 to 39, 53 to 73, 76 to 96, 101 to 121, 126 to 146, 183 to 203, and 248 to 268; these read LWLT…IGLA, TAFS…LLIL, GALL…VTQW, GWPA…SLLR, FGFT…IAAY, LVAS…ALLL, and ALLY…AIFF.

Belongs to the CDS family.

The protein resides in the cell inner membrane. It catalyses the reaction a 1,2-diacyl-sn-glycero-3-phosphate + CTP + H(+) = a CDP-1,2-diacyl-sn-glycerol + diphosphate. Its pathway is phospholipid metabolism; CDP-diacylglycerol biosynthesis; CDP-diacylglycerol from sn-glycerol 3-phosphate: step 3/3. In Brucella melitensis biotype 1 (strain ATCC 23456 / CCUG 17765 / NCTC 10094 / 16M), this protein is Phosphatidate cytidylyltransferase (cdsA).